Here is a 43-residue protein sequence, read N- to C-terminus: Snake venom metalloproteinase crotalin (43 aa).

A Peptidase M12B domain is found at 1–43 (LLRRKSHDHAQNHDGDKCLRGASLGYYQSFLNQYKPQCILNKP). His-13 is a Zn(2+) binding site.

This sequence belongs to the venom metalloproteinase (M12B) family. P-I subfamily. Monomer. Requires Zn(2+) as cofactor. Post-translationally, this protein autoproteolytically degrades to 10 kDa and 14 kDa fragments in the presence of SDS. Interestingly, the two fragments, as well as reduced crotalin are able to bind vWF, indicating that the binding activity does not require a specific protein conformation. As to expression, expressed by the venom gland.

The protein localises to the secreted. Its function is as follows. Snake venom zinc metalloproteinase that inhibits ristocin-induced platelet aggregation by abolishing the binding of von Willebrand factor (vWF) to platelet glycoprotein Ib alpha (GPIBA) through the cleavage of both GP1BA and vWF. Also has fibrinogenolytic activities by degrading the alpha- (FGA) and beta-chain (FGB) of fibrinogen. In vivo, induces a slight hemorrhage when applied to chick chorioallantoic membrane and has potent antithrombic effect. The sequence is that of Snake venom metalloproteinase crotalin from Crotalus atrox (Western diamondback rattlesnake).